The chain runs to 153 residues: Insulin-like growth factor 1 (153 aa).

Residues 49–77 (GPETLCGAELVDALQFVCGDRGFYFNKPT) form a b region. Disulfide bonds link Cys54-Cys96, Cys66-Cys109, and Cys95-Cys100. Positions 78–89 (GYGSSSRRAPQT) are c. Residues 90 to 110 (GIVDECCFRSCDLRRLEMYCA) are a. The d stretch occupies residues 111-118 (PLKPAKSA). Residues 119-153 (RSVRAQRHTDMPKAQKEVHLKNASRGSAGNKNYRM) constitute a propeptide, e peptide. The disordered stretch occupies residues 120 to 153 (SVRAQRHTDMPKAQKEVHLKNASRGSAGNKNYRM). Basic and acidic residues predominate over residues 125-138 (RHTDMPKAQKEVHL). Residues 142–153 (SRGSAGNKNYRM) show a composition bias toward polar residues.

The protein belongs to the insulin family. Forms a ternary complex with IGFR1 and ITGAV:ITGB3. Forms a ternary complex with IGFR1 and ITGA6:ITGB4. Forms a ternary complex with IGFBP3 and ALS.

It is found in the secreted. Its function is as follows. The insulin-like growth factors, isolated from plasma, are structurally and functionally related to insulin but have a much higher growth-promoting activity. May be a physiological regulator of [1-14C]-2-deoxy-D-glucose (2DG) transport and glycogen synthesis in osteoblasts. Stimulates glucose transport in bone-derived osteoblastic (PyMS) cells and is effective at much lower concentrations than insulin, not only regarding glycogen and DNA synthesis but also with regard to enhancing glucose uptake. May play a role in synapse maturation. Ca(2+)-dependent exocytosis of IGF1 is required for sensory perception of smell in the olfactory bulb. Acts as a ligand for IGF1R. Binds to the alpha subunit of IGF1R, leading to the activation of the intrinsic tyrosine kinase activity which autophosphorylates tyrosine residues in the beta subunit thus initiating a cascade of down-stream signaling events leading to activation of the PI3K-AKT/PKB and the Ras-MAPK pathways. Binds to integrins ITGAV:ITGB3 and ITGA6:ITGB4. Its binding to integrins and subsequent ternary complex formation with integrins and IGFR1 are essential for IGF1 signaling. Induces the phosphorylation and activation of IGFR1, MAPK3/ERK1, MAPK1/ERK2 and AKT1. As part of the MAPK/ERK signaling pathway, acts as a negative regulator of apoptosis in cardiomyocytes via promotion of STUB1/CHIP-mediated ubiquitination and degradation of ICER-type isoforms of CREM. The chain is Insulin-like growth factor 1 from Rhinopithecus roxellana (Golden snub-nosed monkey).